The sequence spans 274 residues: Envelope glycoprotein L (274 aa).

The signal sequence occupies residues 1–21 (MMPLLLLILLSTRNLLGAAQS). The 201-residue stretch at 51-251 (VEHKCREALA…RSYRDRFPAV (201 aa)) folds into the gL betaherpesvirus-type domain. A disulfide bridge connects residues C156 and C161.

This sequence belongs to the herpesviridae glycoprotein L (gL) family. Betaherpesvirinae gL subfamily. Interacts with glycoprotein H (gH); this interaction is necessary for the correct processing and cell surface expression of gH.

The protein resides in the virion membrane. Its subcellular location is the host cell membrane. It is found in the host Golgi apparatus. The protein localises to the host trans-Golgi network. Its function is as follows. The heterodimer glycoprotein H-glycoprotein L is required for the fusion of viral and plasma membranes leading to virus entry into the host cell. Acts as a functional inhibitor of gH and maintains gH in an inhibited form. Upon binding to host integrins, gL dissociates from gH leading to activation of the viral fusion glycoproteins gB and gH. This Mus musculus (Mouse) protein is Envelope glycoprotein L.